Consider the following 187-residue polypeptide: UPF0301 protein Cpar_0662 (187 aa).

The protein belongs to the UPF0301 (AlgH) family.

This chain is UPF0301 protein Cpar_0662, found in Chlorobaculum parvum (strain DSM 263 / NCIMB 8327) (Chlorobium vibrioforme subsp. thiosulfatophilum).